A 183-amino-acid chain; its full sequence is MHLLPEQATRHAVSIPELLVSRDERQARQHAWLTRHLTPLVSFTVVAPGPIKDSELTRRIFNHGVTALLAVAKKAGWSVREQAALASASGPEGFLAIEAPARDLKLATIELEHQHPLGRLWDIDVLTPEGDILSRRHFSLPARRCLLCEQSAAECARGKTHALSDLLIRMEALLHDADSSHIN.

The protein belongs to the CitX family.

The enzyme catalyses apo-[citrate lyase ACP] + 2'-(5''-triphospho-alpha-D-ribosyl)-3'-dephospho-CoA = holo-[citrate lyase ACP] + diphosphate. Functionally, transfers 2-(5''-triphosphoribosyl)-3'-dephosphocoenzyme-A on a serine residue to the apo-acyl carrier protein (gamma chain) of the citrate lyase to yield holo-acyl carrier protein. The protein is Apo-citrate lyase phosphoribosyl-dephospho-CoA transferase of Citrobacter koseri (strain ATCC BAA-895 / CDC 4225-83 / SGSC4696).